A 75-amino-acid chain; its full sequence is MQVLVRDNNVDQALRALKKKMQREGIFREMKMRGHYEKPSEKRAREKAEAVRRARKLARKRAQREGLIGGRPGAR.

The disordered stretch occupies residues 52–75 (RRARKLARKRAQREGLIGGRPGAR). Basic residues predominate over residues 53–62 (RARKLARKRA).

This sequence belongs to the bacterial ribosomal protein bS21 family.

This Brucella anthropi (strain ATCC 49188 / DSM 6882 / CCUG 24695 / JCM 21032 / LMG 3331 / NBRC 15819 / NCTC 12168 / Alc 37) (Ochrobactrum anthropi) protein is Small ribosomal subunit protein bS21.